The primary structure comprises 118 residues: Small ribosomal subunit protein uS13 (118 aa).

Positions 94–118 are disordered; that stretch reads GLPVRGQRTRTNARTRKGPRKAIKK.

This sequence belongs to the universal ribosomal protein uS13 family. In terms of assembly, part of the 30S ribosomal subunit. Forms a loose heterodimer with protein S19. Forms two bridges to the 50S subunit in the 70S ribosome.

Functionally, located at the top of the head of the 30S subunit, it contacts several helices of the 16S rRNA. In the 70S ribosome it contacts the 23S rRNA (bridge B1a) and protein L5 of the 50S subunit (bridge B1b), connecting the 2 subunits; these bridges are implicated in subunit movement. Contacts the tRNAs in the A and P-sites. This Thiobacillus denitrificans (strain ATCC 25259 / T1) protein is Small ribosomal subunit protein uS13.